We begin with the raw amino-acid sequence, 82 residues long: Delta-conotoxin-like SmVIA (82 aa).

The N-terminal stretch at 1 to 22 is a signal peptide; the sequence is MKLTCVMIVAVLFLIAWTFVTA. Residues 23–49 constitute a propeptide that is removed on maturation; the sequence is DDSRNGLKNLFPKARHEMKNPEASKLN. 3 cysteine pairs are disulfide-bonded: cysteine 54–cysteine 69, cysteine 61–cysteine 73, and cysteine 68–cysteine 77. A 4-hydroxyproline modification is found at proline 65.

Belongs to the conotoxin O1 superfamily. Expressed by the venom duct.

The protein localises to the secreted. In terms of biological role, delta-conotoxins bind to site 6 of voltage-gated sodium channels (Nav) and inhibit the inactivation process. The polypeptide is Delta-conotoxin-like SmVIA (Conus stercusmuscarum (Fly-specked cone)).